A 265-amino-acid chain; its full sequence is ATP synthase subunit a (265 aa).

A run of 6 helical transmembrane segments spans residues 26-46 (VHLD…FFFY), 88-108 (IGSL…IDLI), 132-152 (DISA…FYTI), 168-188 (PFNH…TLLA), 195-217 (FRLF…MYMA), and 231-251 (LIWA…FMML).

The protein belongs to the ATPase A chain family. As to quaternary structure, F-type ATPases have 2 components, CF(1) - the catalytic core - and CF(0) - the membrane proton channel. CF(1) has five subunits: alpha(3), beta(3), gamma(1), delta(1), epsilon(1). CF(0) has three main subunits: a(1), b(2) and c(9-12). The alpha and beta chains form an alternating ring which encloses part of the gamma chain. CF(1) is attached to CF(0) by a central stalk formed by the gamma and epsilon chains, while a peripheral stalk is formed by the delta and b chains.

The protein localises to the cell inner membrane. Its function is as follows. Key component of the proton channel; it plays a direct role in the translocation of protons across the membrane. This chain is ATP synthase subunit a, found in Histophilus somni (strain 129Pt) (Haemophilus somnus).